Reading from the N-terminus, the 218-residue chain is Small ribosomal subunit protein uS3c (218 aa).

The 80-residue stretch at Ile39–Ala118 folds into the KH type-2 domain.

Belongs to the universal ribosomal protein uS3 family. As to quaternary structure, part of the 30S ribosomal subunit.

It localises to the plastid. The protein localises to the chloroplast. In Ipomoea purpurea (Common morning glory), this protein is Small ribosomal subunit protein uS3c (rps3).